Here is a 332-residue protein sequence, read N- to C-terminus: UPF0194 membrane protein YbhG (332 aa).

The N-terminal stretch at 1–16 (MMKKPVVIGLAVVVLA) is a signal peptide. Residues 108–209 (EEIAQAAAAV…LNLQDSTLIA (102 aa)) adopt a coiled-coil conformation.

This sequence belongs to the UPF0194 family.

The protein resides in the periplasm. The protein is UPF0194 membrane protein YbhG of Escherichia coli O45:K1 (strain S88 / ExPEC).